The sequence spans 178 residues: 6,7-dimethyl-8-ribityllumazine synthase (178 aa).

Residues F23, 61-63, and 85-87 contribute to the 5-amino-6-(D-ribitylamino)uracil site; these read SFE and AVI. 90 to 91 is a (2S)-2-hydroxy-3-oxobutyl phosphate binding site; it reads QT. H93 (proton donor) is an active-site residue. Y118 contributes to the 5-amino-6-(D-ribitylamino)uracil binding site. R132 is a binding site for (2S)-2-hydroxy-3-oxobutyl phosphate.

The protein belongs to the DMRL synthase family.

The enzyme catalyses (2S)-2-hydroxy-3-oxobutyl phosphate + 5-amino-6-(D-ribitylamino)uracil = 6,7-dimethyl-8-(1-D-ribityl)lumazine + phosphate + 2 H2O + H(+). The protein operates within cofactor biosynthesis; riboflavin biosynthesis; riboflavin from 2-hydroxy-3-oxobutyl phosphate and 5-amino-6-(D-ribitylamino)uracil: step 1/2. Its function is as follows. Catalyzes the formation of 6,7-dimethyl-8-ribityllumazine by condensation of 5-amino-6-(D-ribitylamino)uracil with 3,4-dihydroxy-2-butanone 4-phosphate. This is the penultimate step in the biosynthesis of riboflavin. In Thermosynechococcus vestitus (strain NIES-2133 / IAM M-273 / BP-1), this protein is 6,7-dimethyl-8-ribityllumazine synthase.